A 383-amino-acid chain; its full sequence is Trichodiene synthase (383 aa).

The protein belongs to the trichodiene synthase family.

It catalyses the reaction (2E,6E)-farnesyl diphosphate = trichodiene + diphosphate. It participates in sesquiterpene biosynthesis; trichothecene biosynthesis. TS is a member of the terpene cyclase group of enzymes. It catalyzes the isomerization and cyclization of farnesyl pyro-phosphate to form trichodiene, the first cyclic intermediate in the biosynthetic pathway for trichothecenes. It serves to branch trichothecene biosynthesis from the isoprenoid pathway. In Stachybotrys chartarum (Toxic black mold), this protein is Trichodiene synthase (TRI5).